The chain runs to 631 residues: Eukaryotic translation initiation factor 3 subunit L (631 aa).

The PCI domain occupies 335 to 526 (TFVSVLIFFI…AETTLLDGER (192 aa)). Residues 571–631 (KSAPLPVRKP…PKSRQARIAA (61 aa)) form a disordered region. Residues 580–612 (PASSSAPAPATTAAPISKSGESAAPAPAEAPAA) show a composition bias toward low complexity.

The protein belongs to the eIF-3 subunit L family. As to quaternary structure, component of the eukaryotic translation initiation factor 3 (eIF-3) complex.

The protein localises to the cytoplasm. In terms of biological role, component of the eukaryotic translation initiation factor 3 (eIF-3) complex, which is involved in protein synthesis of a specialized repertoire of mRNAs and, together with other initiation factors, stimulates binding of mRNA and methionyl-tRNAi to the 40S ribosome. The eIF-3 complex specifically targets and initiates translation of a subset of mRNAs involved in cell proliferation. The sequence is that of Eukaryotic translation initiation factor 3 subunit L from Cryptococcus neoformans var. neoformans serotype D (strain B-3501A) (Filobasidiella neoformans).